Here is a 433-residue protein sequence, read N- to C-terminus: CinA-like protein (433 aa).

This sequence belongs to the CinA family.

This Prochlorococcus marinus subsp. pastoris (strain CCMP1986 / NIES-2087 / MED4) protein is CinA-like protein.